The chain runs to 425 residues: Pre-mRNA-splicing factor RBM22 (425 aa).

The C3H1-type zinc-finger motif lies at 159 to 186 (RNRPHICSFWVKGECKRGEECPYRHEKP). Positions 232 to 305 (TTLYIGGLGE…RRLNVKWGRS (74 aa)) constitute an RRM domain. 2 disordered regions span residues 304–331 (RSQA…PGLP) and 384–425 (HTMD…HGGP). The span at 389 to 399 (MAPPVPPPMAL) shows a compositional bias: pro residues.

It belongs to the SLT11 family. Component of the pre-catalytic and catalytic spliceosome complexes. Component of the postcatalytic spliceosome P complex.

The protein resides in the nucleus. The protein localises to the cytoplasm. In terms of biological role, required for pre-mRNA splicing as component of the activated spliceosome. Involved in the first step of pre-mRNA splicing. Binds directly to the internal stem-loop (ISL) domain of the U6 snRNA and to the pre-mRNA intron near the 5' splice site during the activation and catalytic phases of the spliceosome cycle. Required for normal early embryogenesis. This chain is Pre-mRNA-splicing factor RBM22 (rbm22), found in Danio rerio (Zebrafish).